A 338-amino-acid polypeptide reads, in one-letter code: Phenylalanine--tRNA ligase alpha subunit (338 aa).

Position 252 (glutamate 252) interacts with Mg(2+).

It belongs to the class-II aminoacyl-tRNA synthetase family. Phe-tRNA synthetase alpha subunit type 1 subfamily. Tetramer of two alpha and two beta subunits. Mg(2+) serves as cofactor.

The protein resides in the cytoplasm. The enzyme catalyses tRNA(Phe) + L-phenylalanine + ATP = L-phenylalanyl-tRNA(Phe) + AMP + diphosphate + H(+). The polypeptide is Phenylalanine--tRNA ligase alpha subunit (Pseudomonas aeruginosa (strain UCBPP-PA14)).